The sequence spans 468 residues: MKHRIQHIHFVGVGGSGMSGIAEVLLNLGYTISGSDLNESAVTRRLAELGMRIAIGHDRANVAGAGAIVTSTAVAGDNPEVLAARAARIPVVPRAVMLAELMRLKRGIAVAGTHGKTTTTSLVASVLAAGGLDPTFVIGGRLTSAGANARLGQGEYIVVEADESDASFLNLLPVMAIVTNIDADHMDTYGHDVARLKSAFIEFTQRLPFYGSAILCADDANVREIMPFVSRPITTYGLSPDAQVCAQDVQADGTRMRFTVQRRDRDVVLPALQVELNLPGLHNVRNALAAIAVATELGVDDAAIREALAAFKGVGRRFTQWGDLPVPAAHGGGIFTLVDDYGHHPVEMAATLAAARGAWPQRRIVLAFQPHRYTRTRDCFEDFVRVLGSADGVLLTEVYAAGEAPLVAADGRALSRALRVAGKVEPVFVEDVGELPQAILDFVRDGDVVVVMGAGSISKTPALVGELA.

ATP is bound at residue 112–118 (GTHGKTT).

This sequence belongs to the MurCDEF family.

It is found in the cytoplasm. The enzyme catalyses UDP-N-acetyl-alpha-D-muramate + L-alanine + ATP = UDP-N-acetyl-alpha-D-muramoyl-L-alanine + ADP + phosphate + H(+). It participates in cell wall biogenesis; peptidoglycan biosynthesis. In terms of biological role, cell wall formation. The polypeptide is UDP-N-acetylmuramate--L-alanine ligase (Bordetella pertussis (strain Tohama I / ATCC BAA-589 / NCTC 13251)).